A 138-amino-acid chain; its full sequence is Putative membrane protein ORF6 (138 aa).

A run of 2 helical transmembrane segments spans residues 4–20 (LTIIFLLSGLTAYHAVL) and 37–53 (VVVLVMIGALLTLLMTI).

It localises to the membrane. This chain is Putative membrane protein ORF6 (ORF6), found in Ictalurid herpesvirus 1 (strain Auburn) (IcHV-1).